A 236-amino-acid chain; its full sequence is (5-formylfuran-3-yl)methyl phosphate synthase (236 aa).

The Schiff-base intermediate with substrate role is filled by lysine 27. The active-site Proton acceptor is lysine 85.

The protein belongs to the MfnB family.

The enzyme catalyses 2 D-glyceraldehyde 3-phosphate = 4-(hydroxymethyl)-2-furancarboxaldehyde phosphate + phosphate + 2 H2O. It functions in the pathway cofactor biosynthesis; methanofuran biosynthesis. In terms of biological role, catalyzes the formation of 4-(hydroxymethyl)-2-furancarboxaldehyde phosphate (4-HFC-P) from two molecules of glyceraldehyde-3-P (GA-3-P). This chain is (5-formylfuran-3-yl)methyl phosphate synthase, found in Methanococcus maripaludis (strain C6 / ATCC BAA-1332).